Consider the following 62-residue polypeptide: Large ribosomal subunit protein bL32 (62 aa).

Basic residues predominate over residues 1 to 18; the sequence is MGVPKKRTSKMRRDRRRA. Residues 1–22 form a disordered region; sequence MGVPKKRTSKMRRDRRRAANNN.

The protein belongs to the bacterial ribosomal protein bL32 family.

The polypeptide is Large ribosomal subunit protein bL32 (Myxococcus xanthus (strain DK1622)).